A 428-amino-acid chain; its full sequence is Peptidase B (428 aa).

Mn(2+) is bound by residues K195 and D200. Residue K207 is part of the active site. Residues D218, D277, and E279 each coordinate Mn(2+). R281 is a catalytic residue.

Belongs to the peptidase M17 family. In terms of assembly, homohexamer. Mn(2+) serves as cofactor.

It localises to the cytoplasm. It carries out the reaction Release of an N-terminal amino acid, Xaa, from a peptide or arylamide. Xaa is preferably Glu or Asp but may be other amino acids, including Leu, Met, His, Cys and Gln.. Probably plays an important role in intracellular peptide degradation. This chain is Peptidase B, found in Klebsiella pneumoniae (strain 342).